Consider the following 178-residue polypeptide: UPF0098 protein PYRAB11530 (178 aa).

An N-terminal signal peptide occupies residues 1 to 22; it reads MRYLVPLLVFMVLGMGCLGGGG.

This sequence belongs to the UPF0098 family.

The protein is UPF0098 protein PYRAB11530 of Pyrococcus abyssi (strain GE5 / Orsay).